The primary structure comprises 92 residues: PqqA binding protein (92 aa).

This sequence belongs to the PqqD family. Monomer. Interacts with PqqE.

Its pathway is cofactor biosynthesis; pyrroloquinoline quinone biosynthesis. Functions as a PqqA binding protein and presents PqqA to PqqE, in the pyrroloquinoline quinone (PQQ) biosynthetic pathway. The protein is PqqA binding protein of Xanthomonas oryzae pv. oryzae (strain PXO99A).